Reading from the N-terminus, the 687-residue chain is MSCKEHKVVHEAHNVEARKTPDHFYRSQPGPSYVQDIEQYRTMYQQSIEDPDAFFGEKAREFLHWEKDFTHVRAGSLRTGDTAWFLNGELNAAYNCVDRHALENPDKVAIIYEADDEADNRVVTFGELLRQVSQVAGVLQSWGVKKGDTVAVYMPMIPEAVVAMLAVARLGAVHSVIFAGFSSGSLRDRIVDAESKVVITCDEGRRGGKTVHTKKIVDEGLAGVGVVSHILVFQRTGSEGIPMKAGRDFWWHEEVRKQRGYLPPVSVNAEDPIFLLYTSGSTGSPKGVVHTTGGYLLGAALTTRYVFDIHPEDVLFTAGDVGWITGHTYALYGPLCLGTATIIFESTPAYPDYGRYWRIIQRHKATHFYVAPTAMRLIKTVGEQEISKYDLSSLRVLGSVGEPIAPDLWEWYNEKVGNNNCVVCDTMWQTESGSHLIAPLAGAIPTKPGSATVPFFGINACIIDPVTGDELEGNDVEGVLAIKSPWPSMARSVWNNHDRYIETYLKPYPGYYFTGDGAGRDHDGYYWIRGRVDDVVNVSGHRLSTAEIEAALSEHEGVSQAAVVGIADELTGQAVVAFVSLKEGYGRGSSTDTDPESIAPDVVPLDTLRRELVLQVRAEIGPFAAPKSVIVVDDLPKTRSGKIMRRTLRKISANEADQLGDLSTLANPETVPAIIAAVGAQFLKGKK.

CoA contacts are provided by residues 206-209 and Thr325; that span reads RGGK. ATP-binding positions include 401–403, 425–430, Asp516, and Arg531; these read GEP and DTMWQT. Residue Ser539 participates in CoA binding. Arg542 serves as a coordination point for ATP. Arg617 serves as a coordination point for CoA.

This sequence belongs to the ATP-dependent AMP-binding enzyme family.

It carries out the reaction acetate + ATP + CoA = acetyl-CoA + AMP + diphosphate. The protein is Acetyl-coenzyme A synthetase 2 (ACS2) of Eremothecium gossypii (strain ATCC 10895 / CBS 109.51 / FGSC 9923 / NRRL Y-1056) (Yeast).